The chain runs to 220 residues: MSTEAPLNISEIFYSIQGESSFAGWPCAFVRLAGCGHGCRYCDTTYAEEPGTAMTIDEIMHRVLAFDAPCVEVTGGEPLLQSGTFGLLSALCDRHPVVLLETGGFLPVDRVDPRVHAIIDIKAPSSGVMEHNCAANFTLALNEPERFEFKIVVASEADYLWAKSYIAGHGILGKCSIIFGPVFGQLEPRLLAEWMLRDRLPVRMQLQLHKYIWNPDARGV.

Residues 16–18 and R31 contribute to the substrate site; that span reads IQG. One can recognise a Radical SAM core domain in the interval 22-215; the sequence is FAGWPCAFVR…LQLHKYIWNP (194 aa). Residues C35, C39, and C42 each contribute to the [4Fe-4S] cluster site. T44 is a binding site for Mg(2+). T74 serves as a coordination point for substrate. Residue G76 participates in S-adenosyl-L-methionine binding.

It belongs to the radical SAM superfamily. 7-carboxy-7-deazaguanine synthase family. Homodimer. Requires [4Fe-4S] cluster as cofactor. It depends on S-adenosyl-L-methionine as a cofactor. Mg(2+) is required as a cofactor.

It catalyses the reaction 6-carboxy-5,6,7,8-tetrahydropterin + H(+) = 7-carboxy-7-deazaguanine + NH4(+). Its pathway is purine metabolism; 7-cyano-7-deazaguanine biosynthesis. Functionally, catalyzes the complex heterocyclic radical-mediated conversion of 6-carboxy-5,6,7,8-tetrahydropterin (CPH4) to 7-carboxy-7-deazaguanine (CDG), a step common to the biosynthetic pathways of all 7-deazapurine-containing compounds. This chain is 7-carboxy-7-deazaguanine synthase, found in Chlorobaculum tepidum (strain ATCC 49652 / DSM 12025 / NBRC 103806 / TLS) (Chlorobium tepidum).